The primary structure comprises 253 residues: Phosphoglycerate mutase 2 (253 aa).

Position 3 is a phosphothreonine (Thr3). Substrate-binding positions include 10 to 17, 23 to 24, Arg62, 89 to 92, Lys100, and 116 to 117; these read RHGESLWN, CG, ERHY, and RR. His11 functions as the Tele-phosphohistidine intermediate in the catalytic mechanism. Position 14 is a phosphoserine (Ser14). The active-site Proton donor/acceptor is Glu89. Ser118 bears the Phosphoserine mark. Thr121 is modified (phosphothreonine). Phosphotyrosine is present on residues Tyr132 and Tyr133. Position 135 is a phosphoserine (Ser135). Thr152 is modified (phosphothreonine). 187–188 is a substrate binding site; it reads GN.

The protein belongs to the phosphoglycerate mutase family. BPG-dependent PGAM subfamily. Homodimer. Interacts with ENO1. In terms of tissue distribution, expressed in the testes (at protein level).

The catalysed reaction is (2R)-2-phosphoglycerate = (2R)-3-phosphoglycerate. The enzyme catalyses (2R)-3-phospho-glyceroyl phosphate = (2R)-2,3-bisphosphoglycerate + H(+). Its function is as follows. Interconversion of 3- and 2-phosphoglycerate with 2,3-bisphosphoglycerate as the primer of the reaction. Can also catalyze the reaction of EC 5.4.2.4 (synthase), but with a reduced activity. In Mus musculus (Mouse), this protein is Phosphoglycerate mutase 2 (Pgam2).